Consider the following 165-residue polypeptide: Leukotoxin-activating lysine-acyltransferase LktC (165 aa).

Catalysis depends on residues H22 and D91.

The protein belongs to the RTX toxin acyltransferase family.

It is found in the cytoplasm. The enzyme catalyses a fatty acyl-[ACP] + L-lysyl-[protein] = N(6)-(fatty acyl)-L-lysyl-[protein] + holo-[ACP] + H(+). Its function is as follows. Involved in fatty acylation of the protoxin (LktA) at two internal lysine residues, thereby converting it to the active toxin. The chain is Leukotoxin-activating lysine-acyltransferase LktC (lktC) from Pasteurella haemolytica-like sp. (strain 5943B).